Here is a 639-residue protein sequence, read N- to C-terminus: MYQLTLPDKSVKKVALGSTYRDFIEKELPFLKNKALAVRLNGKDIQDLSRVVETDANIEVLTYTEKAGWETFQHSAAHLLGMAVQNLYKNANLTVGPVIENGPGFFYYDIDFQGTIITPEDFPKIEAEMERIVKADYTVWRKVVPKKEAIETFQKLGEKYKIEIIGGILSEEVSIYGMGEWFDLCRGPHVSNSGILKSFKLTAISGAYWKADKDNAMLTRIYGVAFPSKKELDQYLFQIEEAKKRDHRKIGKELDLFSFQKEGPGFPFWHPKGTILWNSLADYLRAECNKRGYQEIKTPAVLSSELWKKSGHWDNFHENMYFTDIDEEDYALKPMNCPGCSLIYKHHLHSYRELPLRFAEFGSVHRHELHGVLHGLFRVRAFTQDDSHIYAPLEHLESEVTDIIDFTFTVYKKFGFSEFKTFIATRPEKSQGRDEDWEFATNTLKQSLEKKGIPYGIKEGEGAFYGPKIEFNIKDSIGRLWQCGTIQVDFSMPERFELDYTDSDGQKKRPVMIHRAIYGSLERFIGILIEHYEGKFPLWISPNQIRILTITEKVAEYAKDVYCELVDAGFRVELDTRNEKIGAKIRDSILKKANYLLILGEKEMESGTLAVRKRGQEDTKTLTRSGFISNLQDEIKSAG.

A TGS domain is found at 1–62 (MYQLTLPDKS…ETDANIEVLT (62 aa)). Residues 246-537 (DHRKIGKELD…LIEHYEGKFP (292 aa)) form a catalytic region. Residues C337, H388, and H514 each coordinate Zn(2+).

It belongs to the class-II aminoacyl-tRNA synthetase family. Homodimer. Zn(2+) is required as a cofactor.

It localises to the cytoplasm. The enzyme catalyses tRNA(Thr) + L-threonine + ATP = L-threonyl-tRNA(Thr) + AMP + diphosphate + H(+). Functionally, catalyzes the attachment of threonine to tRNA(Thr) in a two-step reaction: L-threonine is first activated by ATP to form Thr-AMP and then transferred to the acceptor end of tRNA(Thr). Also edits incorrectly charged L-seryl-tRNA(Thr). This Leptospira borgpetersenii serovar Hardjo-bovis (strain JB197) protein is Threonine--tRNA ligase.